The following is a 106-amino-acid chain: U1-lycotoxin-Ls1b (106 aa).

An N-terminal signal peptide occupies residues 1–19 (MKVLVVVALLVTLISYSSS). Positions 20–40 (EGIDDLEADELLSLMANEQTR) are excised as a propeptide. 4 disulfide bridges follow: cysteine 43–cysteine 58, cysteine 50–cysteine 67, cysteine 57–cysteine 85, and cysteine 69–cysteine 83.

The protein belongs to the neurotoxin 19 (CSTX) family. 04 (U1-Lctx) subfamily. Expressed by the venom gland.

The protein resides in the secreted. The polypeptide is U1-lycotoxin-Ls1b (Lycosa singoriensis (Wolf spider)).